A 382-amino-acid polypeptide reads, in one-letter code: Mannitol-1-phosphate 5-dehydrogenase (382 aa).

3-14 (ALHFGAGNIGRG) contributes to the NAD(+) binding site.

Belongs to the mannitol dehydrogenase family.

It carries out the reaction D-mannitol 1-phosphate + NAD(+) = beta-D-fructose 6-phosphate + NADH + H(+). The polypeptide is Mannitol-1-phosphate 5-dehydrogenase (Salmonella newport (strain SL254)).